The following is a 435-amino-acid chain: Xylose isomerase (435 aa).

Catalysis depends on residues His-100 and Asp-103. Mg(2+) is bound by residues Glu-231, Glu-267, His-270, Asp-295, Asp-306, Asp-308, and Asp-338.

This sequence belongs to the xylose isomerase family. In terms of assembly, homotetramer. Mg(2+) is required as a cofactor.

The protein localises to the cytoplasm. The catalysed reaction is alpha-D-xylose = alpha-D-xylulofuranose. The polypeptide is Xylose isomerase (Brucella anthropi (strain ATCC 49188 / DSM 6882 / CCUG 24695 / JCM 21032 / LMG 3331 / NBRC 15819 / NCTC 12168 / Alc 37) (Ochrobactrum anthropi)).